A 156-amino-acid polypeptide reads, in one-letter code: Arginine repressor (156 aa).

This sequence belongs to the ArgR family.

It localises to the cytoplasm. It participates in amino-acid biosynthesis; L-arginine biosynthesis [regulation]. Functionally, regulates arginine biosynthesis genes. The polypeptide is Arginine repressor (Shewanella loihica (strain ATCC BAA-1088 / PV-4)).